Reading from the N-terminus, the 226-residue chain is Agamous-like MADS-box protein AGL23 (226 aa).

The MADS-box domain maps to 6 to 66; the sequence is LGRRKVEIVK…GKVFSFGHPN (61 aa). The stretch at 95–132 forms a coiled coil; that stretch reads VQMLNKSYTEVKAEVEKEQKNKQSRAQNERENENAEEW. Positions 108–127 are enriched in basic and acidic residues; the sequence is EVEKEQKNKQSRAQNERENE. A disordered region spans residues 108-131; it reads EVEKEQKNKQSRAQNERENENAEE.

The protein localises to the nucleus. In terms of biological role, probable transcription factor that controls female gametophyte (megagametogenesis) development and chloroplast biogenesis during embryo development. The sequence is that of Agamous-like MADS-box protein AGL23 from Arabidopsis thaliana (Mouse-ear cress).